The primary structure comprises 534 residues: Apolipoprotein N-acyltransferase (534 aa).

7 helical membrane passes run Val8–Val28, Leu31–Ile51, Ala69–Gly89, Leu105–Ala125, Ile127–Glu147, Val178–Phe198, and Val208–Leu228. Residues Val246 to Ser496 form the CN hydrolase domain. Glu291 functions as the Proton acceptor in the catalytic mechanism. Lys355 is a catalytic residue. Cys408 acts as the Nucleophile in catalysis. A helical transmembrane segment spans residues Phe511 to Phe531.

It belongs to the CN hydrolase family. Apolipoprotein N-acyltransferase subfamily.

It localises to the cell inner membrane. It carries out the reaction N-terminal S-1,2-diacyl-sn-glyceryl-L-cysteinyl-[lipoprotein] + a glycerophospholipid = N-acyl-S-1,2-diacyl-sn-glyceryl-L-cysteinyl-[lipoprotein] + a 2-acyl-sn-glycero-3-phospholipid + H(+). The protein operates within protein modification; lipoprotein biosynthesis (N-acyl transfer). Its function is as follows. Catalyzes the phospholipid dependent N-acylation of the N-terminal cysteine of apolipoprotein, the last step in lipoprotein maturation. This is Apolipoprotein N-acyltransferase from Rhizobium etli (strain CIAT 652).